Here is a 265-residue protein sequence, read N- to C-terminus: 5'-nucleotidase SurE (265 aa).

A divalent metal cation-binding residues include Asp-8, Asp-9, Ser-39, and Asn-96.

The protein belongs to the SurE nucleotidase family. A divalent metal cation is required as a cofactor.

The protein localises to the cytoplasm. The enzyme catalyses a ribonucleoside 5'-phosphate + H2O = a ribonucleoside + phosphate. Functionally, nucleotidase that shows phosphatase activity on nucleoside 5'-monophosphates. This chain is 5'-nucleotidase SurE, found in Dehalococcoides mccartyi (strain CBDB1).